The sequence spans 201 residues: Potassium-transporting ATPase KdpC subunit (201 aa).

A helical transmembrane segment spans residues 13–33 (IIFIIFTILCGGIYTIFITGI).

Belongs to the KdpC family. In terms of assembly, the system is composed of three essential subunits: KdpA, KdpB and KdpC.

It localises to the cell membrane. Part of the high-affinity ATP-driven potassium transport (or Kdp) system, which catalyzes the hydrolysis of ATP coupled with the electrogenic transport of potassium into the cytoplasm. This subunit acts as a catalytic chaperone that increases the ATP-binding affinity of the ATP-hydrolyzing subunit KdpB by the formation of a transient KdpB/KdpC/ATP ternary complex. The protein is Potassium-transporting ATPase KdpC subunit of Clostridium botulinum (strain Alaska E43 / Type E3).